The primary structure comprises 545 residues: Sulfite oxidase, mitochondrial (545 aa).

The transit peptide at 1–79 (MLLLHRAVVL…YQDHRCRAAQ (79 aa)) directs the protein to the mitochondrion. The Cytochrome b5 heme-binding domain occupies 82-161 (THIYTKEEVS…LAQYKIGELN (80 aa)). His118 contacts heme b. Ser123 is subject to Phosphoserine. The heme b site is built by His143, Gln145, and His147. The hinge stretch occupies residues 165 to 174 (KVAPTVETSD). The tract at residues 175–401 (PYADDPVRHP…YSHWQRRDYK (227 aa)) is moco domain. Residues 215 to 219 (FTRNH), Cys264, Asp322, His361, Arg366, and 377 to 379 (HVK) each bind Mo-molybdopterin. Residues 402–538 (GFSPSVDWET…RGVLSNAWHR (137 aa)) are homodimerization.

As to quaternary structure, homodimer. Heme b is required as a cofactor. The cofactor is Mo-molybdopterin.

Its subcellular location is the mitochondrion intermembrane space. It catalyses the reaction sulfite + O2 + H2O = sulfate + H2O2. The protein operates within energy metabolism; sulfur metabolism. Its function is as follows. Catalyzes the oxidation of sulfite to sulfate, the terminal reaction in the oxidative degradation of sulfur-containing amino acids. This Homo sapiens (Human) protein is Sulfite oxidase, mitochondrial (SUOX).